A 520-amino-acid polypeptide reads, in one-letter code: Putative transporter svop-1 (520 aa).

Residues 1–85 (MGDKAILTEV…LGFGRFQLKL (85 aa)) lie on the Cytoplasmic side of the membrane. Residues 86–106 (SILTGMAWMADAMEMMLLSLI) form a helical membrane-spanning segment. Topologically, residues 107–120 (SPALACEWGISSVQ) are extracellular. The helical transmembrane segment at 121 to 141 (QALVTTCVFSGMMLSSTFWGK) threads the bilayer. Topologically, residues 142 to 157 (ICDRFGRRKGLTFSTL) are cytoplasmic. Residues 158 to 178 (VACIMGVISGMSPHFYVLLFF) form a helical membrane-spanning segment. Residue arginine 179 is a topological domain, extracellular. Residues 180–200 (GLTGFGIGGVPQSVTLYAEFL) traverse the membrane as a helical segment. Residues 201–208 (PTAQRAKC) are Cytoplasmic-facing. Residues 209–229 (VVLIESFWAIGAVFEALLAYF) form a helical membrane-spanning segment. Topologically, residues 230 to 237 (VMESFGWR) are extracellular. The chain crosses the membrane as a helical span at residues 238-258 (ALMFLSSLPLGIFAVASFWLP). Residues 259 to 319 (ESARFDMASG…LLSPDLRKTT (61 aa)) lie on the Cytoplasmic side of the membrane. The helical transmembrane segment at 320–340 (ILLWCIWAITAFSYYGMVLFT) threads the bilayer. Residues 341–372 (TVLFQSHDECHGGLFSNGTQMEVCQPLTRSDY) are Extracellular-facing. The chain crosses the membrane as a helical span at residues 373 to 393 (FDLLSTTLAEFPGLIITVLII). Residues 394-410 (EWFGRKKTMALEYAVFA) are Cytoplasmic-facing. A helical membrane pass occupies residues 411–431 (IFTFLLYFCLDRFTVTVLIFV). At 432–434 (ARA) the chain is on the extracellular side. A helical transmembrane segment spans residues 435 to 455 (FISGAFQCAYVYTPEVYPTTL). Residues 456–461 (RAVGLG) lie on the Cytoplasmic side of the membrane. Residues 462–487 (TCSAMARIGAIVTPFIAQVASEKSLS) form a helical membrane-spanning segment. At 488 to 489 (LP) the chain is on the extracellular side. Residues 490–509 (IGIYGTAAILGLIASLSLPI) form a helical membrane-spanning segment. At 510 to 520 (ETKGRQMMDSH) the chain is on the cytoplasmic side.

Belongs to the major facilitator superfamily.

The protein localises to the membrane. This is Putative transporter svop-1 from Caenorhabditis elegans.